The primary structure comprises 83 residues: Exodeoxyribonuclease 7 small subunit (83 aa).

The protein belongs to the XseB family. In terms of assembly, heterooligomer composed of large and small subunits.

It is found in the cytoplasm. The catalysed reaction is Exonucleolytic cleavage in either 5'- to 3'- or 3'- to 5'-direction to yield nucleoside 5'-phosphates.. Bidirectionally degrades single-stranded DNA into large acid-insoluble oligonucleotides, which are then degraded further into small acid-soluble oligonucleotides. In Aeromonas salmonicida (strain A449), this protein is Exodeoxyribonuclease 7 small subunit.